A 174-amino-acid chain; its full sequence is Protein C2-DOMAIN ABA-RELATED 6 (174 aa).

In terms of domain architecture, C2 spans 1–115; that stretch reads MEKTEEEVEM…HKLGLKELPH (115 aa). 7 residues coordinate Ca(2+): R30, D31, D36, D82, K83, D84, and D90.

It belongs to the plant CAR protein family. Binds to PYR/PYL/RCAR abscisic acid intracellular receptors in an ABA-independent manner, both at the plasma membrane and in the nucleus. Subunit of a complex made of CAR6, PHOT1 and RPT3/NPH3. Interacts directly with RPT3/NPH3.

The protein resides in the cell membrane. Its subcellular location is the nucleus. Stimulates the GTPase/ATPase activities of Obg-like ATPases. Mediates the transient calcium-dependent interaction of PYR/PYL/RCAR abscisic acid (ABA) receptors with the plasma membrane and thus regulates ABA sensitivity. Prevents hypocotyl bending as well as gravitropic response under blue light conditions. This chain is Protein C2-DOMAIN ABA-RELATED 6, found in Arabidopsis thaliana (Mouse-ear cress).